The primary structure comprises 119 residues: Phosphoribosyl-AMP cyclohydrolase (119 aa).

Asp-78 contacts Mg(2+). Cys-79 is a Zn(2+) binding site. Mg(2+) contacts are provided by Asp-80 and Asp-82. Residues Cys-95 and Cys-102 each coordinate Zn(2+).

The protein belongs to the PRA-CH family. In terms of assembly, homodimer. Mg(2+) is required as a cofactor. Requires Zn(2+) as cofactor.

Its subcellular location is the cytoplasm. The enzyme catalyses 1-(5-phospho-beta-D-ribosyl)-5'-AMP + H2O = 1-(5-phospho-beta-D-ribosyl)-5-[(5-phospho-beta-D-ribosylamino)methylideneamino]imidazole-4-carboxamide. It participates in amino-acid biosynthesis; L-histidine biosynthesis; L-histidine from 5-phospho-alpha-D-ribose 1-diphosphate: step 3/9. Catalyzes the hydrolysis of the adenine ring of phosphoribosyl-AMP. The protein is Phosphoribosyl-AMP cyclohydrolase of Jannaschia sp. (strain CCS1).